A 470-amino-acid chain; its full sequence is Solute carrier family 7 member 13 (470 aa).

The Cytoplasmic portion of the chain corresponds to 1 to 11; that stretch reads MDRGEKIQLKR. A helical transmembrane segment spans residues 12-32; that stretch reads VFGYWWGTSFLLINIIGAGIF. Residues 33-45 lie on the Extracellular side of the membrane; it reads VSPKGVLAYSCMN. The chain crosses the membrane as a helical span at residues 46-66; sequence VGVSLCVWAGCAILAMTSTLC. Over 67 to 87 the chain is Cytoplasmic; the sequence is SAEISISFPCSGAQYYFLKRY. Residues 88–108 traverse the membrane as a helical segment; sequence FGSTVAFLNLWTSLFLGSGVV. Residues 109–128 are Extracellular-facing; the sequence is AGQALLLAEYSIQPFFPSCS. A helical membrane pass occupies residues 129–149; that stretch reads VPKLPKKCLALAMLWIVGILT. The Cytoplasmic segment spans residues 150 to 162; sequence SRGVKEVTWLQIA. The chain crosses the membrane as a helical span at residues 163-183; the sequence is SSVLKVSILSFISLTGVVFLI. Over 184–206 the chain is Extracellular; it reads RGKKENVERFQNAFDAELPDISH. The chain crosses the membrane as a helical span at residues 207–227; the sequence is LIQAIFQGYFAYSGGACFTLI. Residues 228–240 are Cytoplasmic-facing; that stretch reads AGELKKPRTTIPK. Residues 241–261 form a helical membrane-spanning segment; that stretch reads CIFTALPLVTVVYLLVNISYL. Residues 262–287 lie on the Extracellular side of the membrane; it reads TVLTPREILSSDAVAITWADRAFPSL. Residues 288–308 form a helical membrane-spanning segment; the sequence is AWIMPFAISTSLFSNLLISIF. Residues 309-336 are Cytoplasmic-facing; it reads KSSRPIYLASQEGQLPLLFNTLNSHSSP. A helical membrane pass occupies residues 337–357; the sequence is FTAVLLLVTLGSLAIILTSLI. A topological domain (extracellular) is located at residue aspartate 358. Residues 359 to 379 traverse the membrane as a helical segment; sequence LINYIFFTGSLWSILLMIGIL. The Cytoplasmic segment spans residues 380 to 393; that stretch reads RRRYQEPNLSIPYK. Residues 394 to 414 traverse the membrane as a helical segment; that stretch reads VFLSFPLATIVIDVGLVVIPL. At 415–421 the chain is on the extracellular side; it reads VKSPNVH. The helical transmembrane segment at 422–442 threads the bilayer; the sequence is YVYVLLLVLSGLLFYIPLIHF. The Cytoplasmic segment spans residues 443–470; it reads KIRLAWFEKMTCYLQLLFNICLPDVSEE.

It belongs to the amino acid-polyamine-organocation (APC) superfamily. In terms of assembly, disulfide-linked heterodimer composed of the catalytic light subunit SLC7A13 and the heavy subunit SLC3A1. In terms of tissue distribution, expressed in the kidney.

The protein resides in the apical cell membrane. It catalyses the reaction L-cystine(out) + L-aspartate(in) = L-cystine(in) + L-aspartate(out). The enzyme catalyses L-cystine(out) = L-cystine(in). The catalysed reaction is L-aspartate(in) + L-glutamate(out) = L-aspartate(out) + L-glutamate(in). It carries out the reaction L-aspartate(in) + L-glutamine(out) = L-aspartate(out) + L-glutamine(in). It catalyses the reaction L-aspartate(in) + L-methionine(out) = L-aspartate(out) + L-methionine(in). The enzyme catalyses L-leucine(out) + L-aspartate(in) = L-leucine(in) + L-aspartate(out). The catalysed reaction is L-valine(out) + L-aspartate(in) = L-valine(in) + L-aspartate(out). It carries out the reaction L-aspartate(in) + L-phenylalanine(out) = L-aspartate(out) + L-phenylalanine(in). It catalyses the reaction L-tyrosine(out) + L-aspartate(in) = L-tyrosine(in) + L-aspartate(out). The enzyme catalyses L-tryptophan(out) + L-aspartate(in) = L-tryptophan(in) + L-aspartate(out). Functionally, associates with SLC3A1/rBAT to form a functional heterodimeric complex that transports anionic and neutral amino acids across the apical plasma membrane of renal epithelium. Preferentially mediates exchange transport, but can also operate via facilitated diffusion. May act as a major transporter for L-cystine in late proximal tubules, ensuring its reabsorption from the luminal fluid in exchange for cytosolic L-glutamate or L-aspartate. The polypeptide is Solute carrier family 7 member 13 (SLC7A13) (Homo sapiens (Human)).